The sequence spans 373 residues: P2Y purinoceptor 1 (373 aa).

Over methionine 1–phenylalanine 51 the chain is Extracellular. Asparagine 11 and asparagine 27 each carry an N-linked (GlcNAc...) asparagine glycan. 2 disulfide bridges follow: cysteine 42/cysteine 296 and cysteine 124/cysteine 202. ADP is bound at residue lysine 46. Residues tyrosine 52–tryptophan 74 form a helical membrane-spanning segment. Over methionine 75–serine 87 the chain is Cytoplasmic. A helical transmembrane segment spans residues valine 88–phenylalanine 109. The Extracellular segment spans residues tyrosine 110–lysine 125. Asparagine 113 carries N-linked (GlcNAc...) asparagine glycosylation. A helical transmembrane segment spans residues leucine 126–alanine 147. Topologically, residues histidine 148 to lysine 166 are cytoplasmic. The helical transmembrane segment at asparagine 167–phenylalanine 188 threads the bilayer. Topologically, residues tyrosine 189 to tyrosine 214 are extracellular. Asparagine 197 carries an N-linked (GlcNAc...) asparagine glycan. Residue tyrosine 203–threonine 205 participates in ADP binding. Residues phenylalanine 215 to tyrosine 237 form a helical membrane-spanning segment. At glycine 238 to tyrosine 260 the chain is on the cytoplasmic side. Residues leucine 261–leucine 284 traverse the membrane as a helical segment. ADP contacts are provided by residues asparagine 283–arginine 287, tyrosine 303–tyrosine 306, and arginine 310. Over arginine 285 to tyrosine 303 the chain is Extracellular. The helical transmembrane segment at alanine 304–phenylalanine 325 threads the bilayer. Residues leucine 326–leucine 373 are Cytoplasmic-facing.

It belongs to the G-protein coupled receptor 1 family.

It is found in the cell membrane. In terms of biological role, receptor for extracellular adenine nucleotides such as ADP. In platelets, binding to ADP leads to mobilization of intracellular calcium ions via activation of phospholipase C, a change in platelet shape, and ultimately platelet aggregation. This chain is P2Y purinoceptor 1 (P2ry1), found in Mus musculus (Mouse).